The sequence spans 339 residues: Scoulerine-9-O-methyltransferase 3 (339 aa).

Met-161 contacts S-adenosyl-L-methionine. Asp-164 is a binding site for substrate. S-adenosyl-L-methionine-binding positions include Thr-165, Gly-191, Asp-214, Asp-228–Val-229, and Lys-242. Residue Ser-243–Glu-247 coordinates substrate. His-246 serves as the catalytic Proton acceptor.

The protein belongs to the class I-like SAM-binding methyltransferase superfamily. Cation-independent O-methyltransferase family. COMT subfamily. As to quaternary structure, homodimer. Forms heterodimer with SOMT2. The heterodimer SOMT2-SOMT3 possesses 3-O-acetyl-4'-O-demethylpapaveroxine 4'-O-methyltransferase activity, where SOMT2 is the catalytic subunit. Highly expressed in capsules. Expressed is stems. Expressed at low levels in roots.

The enzyme catalyses (S)-scoulerine + S-adenosyl-L-methionine = (S)-tetrahydrocolumbamine + S-adenosyl-L-homocysteine + H(+). Its pathway is alkaloid biosynthesis. Its function is as follows. Methyltransferase involved in the biosynthesis of the benzylisoquinoline alkaloid noscapine. Catalyzes the conversion of (S)-scoulerine to (S)-tetrahydrocolumbamine. The chain is Scoulerine-9-O-methyltransferase 3 from Papaver somniferum (Opium poppy).